Here is a 438-residue protein sequence, read N- to C-terminus: V-type ATP synthase beta chain (438 aa).

The protein belongs to the ATPase alpha/beta chains family.

Its function is as follows. Produces ATP from ADP in the presence of a proton gradient across the membrane. The V-type beta chain is a regulatory subunit. In Chlamydia abortus (strain DSM 27085 / S26/3) (Chlamydophila abortus), this protein is V-type ATP synthase beta chain.